The chain runs to 214 residues: Ribonuclease HII (214 aa).

The RNase H type-2 domain maps to 18–208 (SRVVGVDEVG…SLLPSEAHLC (191 aa)). A divalent metal cation is bound by residues D24, E25, and D116.

Belongs to the RNase HII family. It depends on Mn(2+) as a cofactor. The cofactor is Mg(2+).

The protein localises to the cytoplasm. It carries out the reaction Endonucleolytic cleavage to 5'-phosphomonoester.. Functionally, endonuclease that specifically degrades the RNA of RNA-DNA hybrids. The polypeptide is Ribonuclease HII (Thermosynechococcus vestitus (strain NIES-2133 / IAM M-273 / BP-1)).